A 278-amino-acid chain; its full sequence is GTPase Era (278 aa).

Positions 7 to 168 (YCGYIAIVGK…ENLIYPYLPN (162 aa)) constitute an Era-type G domain. The G1 stretch occupies residues 15-22 (GKPNVGKS). A GTP-binding site is contributed by 15–22 (GKPNVGKS). A G2 region spans residues 41-45 (NTTQK). The G3 stretch occupies residues 62-65 (DTPG). Residues 62–66 (DTPGI) and 117–120 (NKID) each bind GTP. The interval 117–120 (NKID) is G4. A G5 region spans residues 147 to 149 (ISA). One can recognise a KH type-2 domain in the interval 199–276 (LRDELPSIIT…YLIIWVKVKI (78 aa)).

The protein belongs to the TRAFAC class TrmE-Era-EngA-EngB-Septin-like GTPase superfamily. Era GTPase family. As to quaternary structure, monomer.

Its subcellular location is the cytoplasm. It localises to the cell membrane. Its function is as follows. An essential GTPase that binds both GDP and GTP, with rapid nucleotide exchange. Plays a role in 16S rRNA processing and 30S ribosomal subunit biogenesis and possibly also in cell cycle regulation and energy metabolism. The chain is GTPase Era from Buchnera aphidicola subsp. Schizaphis graminum (strain Sg).